We begin with the raw amino-acid sequence, 215 residues long: N-(5'-phosphoribosyl)anthranilate isomerase (215 aa).

The protein belongs to the TrpF family.

It carries out the reaction N-(5-phospho-beta-D-ribosyl)anthranilate = 1-(2-carboxyphenylamino)-1-deoxy-D-ribulose 5-phosphate. Its pathway is amino-acid biosynthesis; L-tryptophan biosynthesis; L-tryptophan from chorismate: step 3/5. This Parvibaculum lavamentivorans (strain DS-1 / DSM 13023 / NCIMB 13966) protein is N-(5'-phosphoribosyl)anthranilate isomerase.